Consider the following 144-residue polypeptide: UPF0102 protein Veis_0630 (144 aa).

A disordered region spans residues 11 to 31 (PPAAAPGPAPAPASAATASER).

The protein belongs to the UPF0102 family.

The protein is UPF0102 protein Veis_0630 of Verminephrobacter eiseniae (strain EF01-2).